The following is an 848-amino-acid chain: MWLQLGLPSLSLSPTPTVGRSLCLILWFLSLVLRASTQAPAPTVNTHFGKLRGARVPLPSEILGPVDQYLGVPYAAPPIGEKRFLPPEPPPSWSGIRNATHFPPVCPQNIHTAVPEVMLPVWFTANLDIVATYIQEPNEDCLYLNVYVPTEDVKRISKECARKPNKKICRKGGSGAKKQGEDLADNDGDEDEDIRDSGAKPVMVYIHGGSYMEGTGNMIDGSVLASYGNVIVITLNYRVGVLGFLSTGDQAAKGNYGLLDQIQALRWVSENIAFFGGDPRRITVFGSGIGASCVSLLTLSHHSEGLFQRAIIQSGSALSSWAVNYQPVKYTSLLADKVGCNVLDTVDMVDCLRQKSAKELVEQDIQPARYHVAFGPVIDGDVIPDDPEILMEQGEFLNYDIMLGVNQGEGLKFVEGVVDPEDGVSGTDFDYSVSNFVDNLYGYPEGKDTLRETIKFMYTDWADRDNPETRRKTLVALFTDHQWVEPSVVTADLHARYGSPTYFYAFYHHCQSLMKPAWSDAAHGDEVPYVFGVPMVGPTDLFPCNFSKNDVMLSAVVMTYWTNFAKTGDPNKPVPQDTKFIHTKANRFEEVAWSKYNPRDQLYLHIGLKPRVRDHYRATKVAFWKHLVPHLYNLHDMFHYTSTTTKVPPPDTTHSSHITRRPNGKTWSTKRPAISPAYSNENAPGSWNGDQDAGPLLVENPRDYSTELSVTIAVGASLLFLNVLAFAALYYRKDKRRQEPLRQPSPQRGTGAPELGTAPEEELAALQLGPTHHECEAGPPHDTLRLTALPDYTLTLRRSPDDIPLMTPNTITMIPNSLVGLQTLHPYNTFAAGFNSTGLPNSHSTTRV.

An N-terminal signal peptide occupies residues 1–37; the sequence is MWLQLGLPSLSLSPTPTVGRSLCLILWFLSLVLRAST. At 38–709 the chain is on the extracellular side; sequence QAPAPTVNTH…NPRDYSTELS (672 aa). A glycan (N-linked (GlcNAc...) asparagine) is linked at asparagine 98. A disulfide bridge links cysteine 106 with cysteine 141. Residues 169-195 are disordered; it reads CRKGGSGAKKQGEDLADNDGDEDEDIR. A compositionally biased stretch (acidic residues) spans 182–194; sequence DLADNDGDEDEDI. 2 disulfides stabilise this stretch: cysteine 340-cysteine 351 and cysteine 510-cysteine 544. Asparagine 545 carries N-linked (GlcNAc...) asparagine glycosylation. Composition is skewed to polar residues over residues 645–656 and 677–689; these read TKVPPPDTTHSS and AYSN…SWNG. The tract at residues 645-691 is disordered; the sequence is TKVPPPDTTHSSHITRRPNGKTWSTKRPAISPAYSNENAPGSWNGDQ. Residues 710 to 730 traverse the membrane as a helical segment; sequence VTIAVGASLLFLNVLAFAALY. Topologically, residues 731–848 are cytoplasmic; sequence YRKDKRRQEP…LPNSHSTTRV (118 aa). Serine 745 carries the phosphoserine modification. Tyrosine 792 carries the post-translational modification Phosphotyrosine.

The protein belongs to the type-B carboxylesterase/lipase family. As to quaternary structure, homodimer, and heterodimer with NLGN1 and NLGN2. Interacts with neurexins NRXN1, NRXN2 and NRXN3. Interaction with neurexins is mediated by heparan sulfate glycan modification on neurexin. Interacts (via its C-terminus) with DLG4/PSD-95 (via PDZ domain 3). Post-translationally, the N-terminus is blocked. Detected in brain and on hippocampus neurons, especially at excitatory synapses. Detected in retina (at protein level). Expressed in brain, spinal cord and dorsal root ganglion.

It is found in the cell membrane. It localises to the synapse. In terms of biological role, cell surface protein involved in cell-cell-interactions via its interactions with neurexin family members. Plays a role in synapse function and synaptic signal transmission, and probably mediates its effects by recruiting and clustering other synaptic proteins. May promote the initial formation of synapses, but is not essential for this. May also play a role in glia-glia or glia-neuron interactions in the developing peripheral nervous system. This is Neuroligin-3 (Nlgn3) from Rattus norvegicus (Rat).